An 85-amino-acid chain; its full sequence is MATKKAGGSTRNGRDSEAKRLGVKRFGGESVLAGSIIVRQRGTKFHAGNNVGMGRDHTLFATADGKVKFEVKGEKSRKYVVIVTE.

A disordered region spans residues 1–20; that stretch reads MATKKAGGSTRNGRDSEAKR.

Belongs to the bacterial ribosomal protein bL27 family.

In Haemophilus influenzae (strain ATCC 51907 / DSM 11121 / KW20 / Rd), this protein is Large ribosomal subunit protein bL27.